The primary structure comprises 603 residues: UvrABC system protein C (603 aa).

Residues 15–92 (DQPGCYLMKD…IKKHDPRFNI (78 aa)) form the GIY-YIG domain. The UVR domain occupies 197-232 (KTVKNDLMKKMQEAAENMEFEKAGEFRDQINAIETT).

This sequence belongs to the UvrC family. As to quaternary structure, interacts with UvrB in an incision complex.

The protein resides in the cytoplasm. The UvrABC repair system catalyzes the recognition and processing of DNA lesions. UvrC both incises the 5' and 3' sides of the lesion. The N-terminal half is responsible for the 3' incision and the C-terminal half is responsible for the 5' incision. The sequence is that of UvrABC system protein C from Listeria monocytogenes serotype 4b (strain F2365).